Here is a 310-residue protein sequence, read N- to C-terminus: Ribosomal RNA small subunit methyltransferase H (310 aa).

S-adenosyl-L-methionine-binding positions include Gly32–His34, Asp52, Phe79, Asp100, and Gln107.

Belongs to the methyltransferase superfamily. RsmH family.

The protein resides in the cytoplasm. It catalyses the reaction cytidine(1402) in 16S rRNA + S-adenosyl-L-methionine = N(4)-methylcytidine(1402) in 16S rRNA + S-adenosyl-L-homocysteine + H(+). Functionally, specifically methylates the N4 position of cytidine in position 1402 (C1402) of 16S rRNA. This Geobacillus thermodenitrificans (strain NG80-2) protein is Ribosomal RNA small subunit methyltransferase H.